We begin with the raw amino-acid sequence, 431 residues long: F-box protein pof14 (431 aa).

An F-box; atypical domain is found at 172–186 (CPDEILQLIFSYCYD).

Component of the E3 ubiquitin ligase Skp1-Cullin-1-F-box (SCF) complex. Interacts with skp1, cul1 and erg9.

It is found in the cytoplasm. Its subcellular location is the nucleus. The protein localises to the endoplasmic reticulum. Expression is induced during oxidative stress. Plays an essential, SCF-independent, role in the stress response to hydrogen peroxide for survival, by negatively regulating ergosterol synthesis via direct binding to the squalene synthase erg9. This Schizosaccharomyces pombe (strain 972 / ATCC 24843) (Fission yeast) protein is F-box protein pof14 (pof14).